The primary structure comprises 450 residues: Saccharopine dehydrogenase [NADP(+), L-glutamate-forming] (450 aa).

NADP(+) is bound by residues Ser11–Val14, Cys33–Thr35, Asp55–Val56, Ile76, Thr98–Ser99, Leu125–Pro127, and Ser175. Residues Ser99–Tyr100 and Asp126 contribute to the L-saccharopine site. L-saccharopine contacts are provided by residues Arg224 and Thr245–Arg247.

Belongs to the saccharopine dehydrogenase family. Homodimer.

It carries out the reaction L-saccharopine + NADP(+) + H2O = (S)-2-amino-6-oxohexanoate + L-glutamate + NADPH + H(+). The protein operates within amino-acid biosynthesis; L-lysine biosynthesis via AAA pathway; L-lysine from L-alpha-aminoadipate (fungal route): step 2/3. The sequence is that of Saccharopine dehydrogenase [NADP(+), L-glutamate-forming] (LYS3) from Pyricularia oryzae (strain 70-15 / ATCC MYA-4617 / FGSC 8958) (Rice blast fungus).